The following is a 129-amino-acid chain: Small ribosomal subunit protein uS9 (129 aa).

Over residues T104–K113 the composition is skewed to basic and acidic residues. Residues T104 to R129 form a disordered region. Over residues K114–R129 the composition is skewed to basic residues.

The protein belongs to the universal ribosomal protein uS9 family.

This Sulfurimonas denitrificans (strain ATCC 33889 / DSM 1251) (Thiomicrospira denitrificans (strain ATCC 33889 / DSM 1251)) protein is Small ribosomal subunit protein uS9.